The following is a 954-amino-acid chain: Valine--tRNA ligase (954 aa).

The short motif at 48-58 (PNVTGSLHMGH) is the 'HIGH' region element. A 'KMSKS' region motif is present at residues 560–564 (KMSKS). Lys563 is an ATP binding site. A coiled-coil region spans residues 886–954 (INKDTELARL…RAQYLSIENL (69 aa)).

Belongs to the class-I aminoacyl-tRNA synthetase family. ValS type 1 subfamily. As to quaternary structure, monomer.

It is found in the cytoplasm. The enzyme catalyses tRNA(Val) + L-valine + ATP = L-valyl-tRNA(Val) + AMP + diphosphate. Its function is as follows. Catalyzes the attachment of valine to tRNA(Val). As ValRS can inadvertently accommodate and process structurally similar amino acids such as threonine, to avoid such errors, it has a 'posttransfer' editing activity that hydrolyzes mischarged Thr-tRNA(Val) in a tRNA-dependent manner. This Mannheimia succiniciproducens (strain KCTC 0769BP / MBEL55E) protein is Valine--tRNA ligase.